Here is a 219-residue protein sequence, read N- to C-terminus: MNQLEMKKLAAQAALQYVKADTIVGVGSGSTVNCFIEALGTIKDKIQGAVAASKESEELLRKQGIEVFNANDVSSLDIYVDGADEINPQKMMIKGGGAALTREKIVAALAKKFICIVDSSKQVDVLGSTFPLPVEVIPMARSQVGRKLAALGGSPEYREGVVTDNGNVILDVHNFSILNPVEIEKELNNVAGVVTNGIFALRGADVVIVGTPEGAKVID.

Residues 28-31, 81-84, and 94-97 each bind substrate; these read SGST, DGAD, and KGGG. Glutamate 103 serves as the catalytic Proton acceptor. A substrate-binding site is contributed by lysine 121.

It belongs to the ribose 5-phosphate isomerase family. In terms of assembly, homodimer.

The catalysed reaction is aldehydo-D-ribose 5-phosphate = D-ribulose 5-phosphate. Its pathway is carbohydrate degradation; pentose phosphate pathway; D-ribose 5-phosphate from D-ribulose 5-phosphate (non-oxidative stage): step 1/1. Catalyzes the reversible conversion of ribose-5-phosphate to ribulose 5-phosphate. The polypeptide is Ribose-5-phosphate isomerase A (Haemophilus influenzae (strain ATCC 51907 / DSM 11121 / KW20 / Rd)).